The primary structure comprises 252 residues: Large ribosomal subunit protein uL4 (252 aa).

This sequence belongs to the universal ribosomal protein uL4 family. In terms of assembly, part of the 50S ribosomal subunit.

Functionally, one of the primary rRNA binding proteins, this protein initially binds near the 5'-end of the 23S rRNA. It is important during the early stages of 50S assembly. It makes multiple contacts with different domains of the 23S rRNA in the assembled 50S subunit and ribosome. In terms of biological role, forms part of the polypeptide exit tunnel. This is Large ribosomal subunit protein uL4 from Methanococcus maripaludis (strain DSM 14266 / JCM 13030 / NBRC 101832 / S2 / LL).